The primary structure comprises 156 residues: Ribosome-binding factor A (156 aa).

The interval alanine 129–arginine 156 is disordered.

The protein belongs to the RbfA family. As to quaternary structure, monomer. Binds 30S ribosomal subunits, but not 50S ribosomal subunits or 70S ribosomes.

It localises to the cytoplasm. In terms of biological role, one of several proteins that assist in the late maturation steps of the functional core of the 30S ribosomal subunit. Associates with free 30S ribosomal subunits (but not with 30S subunits that are part of 70S ribosomes or polysomes). Required for efficient processing of 16S rRNA. May interact with the 5'-terminal helix region of 16S rRNA. This chain is Ribosome-binding factor A, found in Salinispora arenicola (strain CNS-205).